Consider the following 253-residue polypeptide: MHILVTNDDGIHHPGLAALRDGLARDHRVQVVAPDRERSAIAHAITLLTPLRAFSQTNGNGIPSWAVNGTPADCVKLGVLELLGEKPDLVVSGINPGPNVGVNLNYSGTVSAAREAALLGIPAIAVSVSNPYGTHFSDAARFMQDLVADVAERGLPKGVFLNVNLPDVPMEEIAGVRICRQGIARLEEAFHVRKDPRNQPYYWQGSETQLFGESPDEDGVALRENCIAVTPVQCDMTDYGFLNQLKEWKVEKP.

A divalent metal cation contacts are provided by Asp8, Asp9, Ser39, and Asn95.

Belongs to the SurE nucleotidase family. A divalent metal cation is required as a cofactor.

It localises to the cytoplasm. It carries out the reaction a ribonucleoside 5'-phosphate + H2O = a ribonucleoside + phosphate. Nucleotidase that shows phosphatase activity on nucleoside 5'-monophosphates. In Desulfatibacillum aliphaticivorans, this protein is 5'-nucleotidase SurE.